We begin with the raw amino-acid sequence, 84 residues long: UPF0512 protein O (84 aa).

This sequence belongs to the UPF0512 family.

This is UPF0512 protein O from Dictyostelium discoideum (Social amoeba).